A 110-amino-acid polypeptide reads, in one-letter code: Hydrogenase maturation factor HypA (110 aa).

Residue His-2 coordinates Ni(2+). The Zn(2+) site is built by Cys-70, Cys-73, Cys-86, and Cys-89.

It belongs to the HypA/HybF family.

Its function is as follows. Involved in the maturation of [NiFe] hydrogenases. Required for nickel insertion into the metal center of the hydrogenase. This is Hydrogenase maturation factor HypA from Geotalea uraniireducens (strain Rf4) (Geobacter uraniireducens).